The sequence spans 213 residues: Thymidylate kinase (213 aa).

Position 10-17 (10-17 (GIDGCGKT)) interacts with ATP.

The protein belongs to the thymidylate kinase family.

The catalysed reaction is dTMP + ATP = dTDP + ADP. Its function is as follows. Phosphorylation of dTMP to form dTDP in both de novo and salvage pathways of dTTP synthesis. This Synechococcus sp. (strain WH7803) protein is Thymidylate kinase.